The primary structure comprises 480 residues: Acyl-lipid (8-3)-desaturase (480 aa).

The interval 1-30 (MAPHSADTAGLVPSDELRLRTSNSKGPEQE) is disordered. In terms of domain architecture, Cytochrome b5 heme-binding spans 33–107 (LKKYTLEDVS…LAKYCIGELV (75 aa)). Positions 68 and 90 each coordinate heme. 2 consecutive transmembrane segments (helical) span residues 151–171 (IHPH…ASYY) and 173–193 (AFFW…MGFF). A Histidine box-1 motif is present at residues 203–207 (HDGNH). Residues 238-243 (HVVGHH) carry the Histidine box-2 motif. 3 helical membrane passes run 280–300 (IYLA…DDFL), 322–342 (IFFQ…SVYG), and 348–368 (TFLA…AFLF). A Histidine box-3 motif is present at residues 419-423 (QIEHH).

Belongs to the fatty acid desaturase type 1 family. Requires Fe(2+) as cofactor.

It is found in the membrane. The enzyme catalyses an (8Z,11Z,14Z)-icosatrienoyl-containing glycerolipid + 2 Fe(II)-[cytochrome b5] + O2 + 2 H(+) = (5Z,8Z,11Z,14Z)-eicosatetraenoyl-containing glycerolipid + 2 Fe(III)-[cytochrome b5] + 2 H2O. It catalyses the reaction an (8Z,11Z,14Z,17Z)-eicosatetraenoyl-containing glycerolipid + 2 Fe(II)-[cytochrome b5] + O2 + 2 H(+) = a (5Z,8Z,11Z,14Z,17Z)-eicosapentaenoyl-containing glycerolipid + 2 Fe(III)-[cytochrome b5] + 2 H2O. Fatty acid desaturase that introduces a cis double bond at the 5-position in 20-carbon polyunsaturated fatty acids incorporated in a glycerolipid that contain a Delta(8) double bond. The sequence is that of Acyl-lipid (8-3)-desaturase from Physcomitrium patens (Spreading-leaved earth moss).